The primary structure comprises 651 residues: Bromodomain-containing protein 7 (651 aa).

Residue lysine 21 forms a Glycyl lysine isopeptide (Lys-Gly) (interchain with G-Cter in SUMO2) linkage. A compositionally biased stretch (polar residues) spans 35–45 (TELSTGSSGHD). Residues 35-132 (TELSTGSSGH…SSLAKQEEVE (98 aa)) are disordered. Residues 47–57 (SLFEDKNDHDK) show a composition bias toward basic and acidic residues. Lysine 52 is covalently cross-linked (Glycyl lysine isopeptide (Lys-Gly) (interchain with G-Cter in SUMO2)). Basic residues predominate over residues 58–69 (HKDRKRKKRKKG). The short motif at 65-96 (KRKKGEKQIPGEEKGRKRRRVKEDKKKRDRDR) is the Nuclear localization signal element. Over residues 70 to 106 (EKQIPGEEKGRKRRRVKEDKKKRDRDRVENEAEKDLQ) the composition is skewed to basic and acidic residues. Residues lysine 127, lysine 186, lysine 197, lysine 201, lysine 212, and lysine 241 each participate in a glycyl lysine isopeptide (Lys-Gly) (interchain with G-Cter in SUMO2) cross-link. The Bromo domain maps to 131–235 (VEQTPLQEAL…HSGMKILSQE (105 aa)). The disordered stretch occupies residues 253–312 (TRKQKDGTDTSQSGEDGGCWQREREDSGDAEAHASKSPSKENKKKDNDMLEDKFKSNNLE). The span at 273 to 312 (QREREDSGDAEAHASKSPSKENKKKDNDMLEDKFKSNNLE) shows a compositional bias: basic and acidic residues. Phosphoserine is present on residues serine 279 and serine 289. Glycyl lysine isopeptide (Lys-Gly) (interchain with G-Cter in SUMO2) cross-links involve residues lysine 305 and lysine 307. Lysine 328 is modified (N6-acetyllysine). A Glycyl lysine isopeptide (Lys-Gly) (interchain with G-Cter in SUMO2) cross-link involves residue lysine 344. Residue serine 380 is modified to Phosphoserine. Residue lysine 389 forms a Glycyl lysine isopeptide (Lys-Gly) (interchain with G-Cter in SUMO2) linkage. Position 482 is a phosphoserine (serine 482). At threonine 514 the chain carries Phosphothreonine. The stretch at 536–567 (SEEAEIFQKKLDETTRLLRELQEAQNERLSTR) forms a coiled coil. The residue at position 621 (serine 621) is a Phosphoserine.

As to quaternary structure, interacts with TRIM24, PTPN13 and DVL1. Identified in a complex with SMARCA4/BRG1, SMARCC1/BAF155, SMARCE1/BAF57, DPF2/BAF45D and ARID2, subunits of the SWI/SNF-B (PBAF) chromatin remodeling complex. Interacts with IRF2 and HNRPUL1. Interacts (via N-terminus) with TP53. Interacts (via C-terminus) with EP300. Interacts with BRCA1. Interacts (via bromo domain) with histone H3 (via N-terminus) acetylated at 'Lys-14' (H3K14ac). Has low affinity for histone H3 acetylated at 'Lys-9' (H3K9ac). Has the highest affinity for histone H3 that is acetylated both at 'Lys-9' (H3K9ac) and at 'Lys-14' (H3K14ac). Has very low affinity for non-acetylated histone H3. Interacts (via bromo domain) with histone H4 (via N-terminus) acetylated at 'Lys-8' (H3K8ac) (in vitro).

Its subcellular location is the nucleus. The protein resides in the chromosome. In terms of biological role, acts both as coactivator and as corepressor. May play a role in chromatin remodeling. Activator of the Wnt signaling pathway in a DVL1-dependent manner by negatively regulating the GSK3B phosphotransferase activity. Induces dephosphorylation of GSK3B at 'Tyr-216'. Down-regulates TRIM24-mediated activation of transcriptional activation by AR. Transcriptional corepressor that down-regulates the expression of target genes. Binds to target promoters, leading to increased histone H3 acetylation at 'Lys-9' (H3K9ac). Binds to the ESR1 promoter. Recruits BRCA1 and POU2F1 to the ESR1 promoter. Coactivator for TP53-mediated activation of transcription of a set of target genes. Required for TP53-mediated cell-cycle arrest in response to oncogene activation. Promotes acetylation of TP53 at 'Lys-382', and thereby promotes efficient recruitment of TP53 to target promoters. Inhibits cell cycle progression from G1 to S phase. This is Bromodomain-containing protein 7 (BRD7) from Pongo abelii (Sumatran orangutan).